We begin with the raw amino-acid sequence, 161 residues long: Zinc metalloproteinase/disintegrin (161 aa).

Residues 1 to 72 (ERDLLVAVTM…ENPQCILNKH (72 aa)) enclose the Peptidase M12B domain. A Zn(2+)-binding site is contributed by His12. Glu13 is an active-site residue. The Zn(2+) site is built by His16 and His22. 2 disulfides stabilise this stretch: Cys27–Cys51 and Cys29–Cys34. The propeptide occupies 73-88 (LRTDTVSTPVSGNELL). The 73-residue stretch at 89-161 (EAGEECDCGT…ADCPRNRFHA (73 aa)) folds into the Disintegrin domain. Intrachain disulfides connect Cys94–Cys109, Cys96–Cys104, Cys103–Cys126, Cys117–Cys123, Cys122–Cys147, and Cys135–Cys154. The Cell attachment site signature appears at 139–141 (RGD).

It belongs to the venom metalloproteinase (M12B) family. P-II subfamily. P-IIa sub-subfamily. As to quaternary structure, monomer. In terms of tissue distribution, expressed by the venom gland.

The protein localises to the secreted. Its function is as follows. Impairs hemostasis in the envenomed animal. Disintegrin: inhibit platelet aggregation induced by ADP, thrombin, platelet-activating factor and collagen. Acts by inhibiting fibrinogen interaction with platelet receptors GPIIb/GPIIIa (ITGA2B/ITGB3). This Bothrops jararaca (Jararaca) protein is Zinc metalloproteinase/disintegrin.